Consider the following 291-residue polypeptide: Trimeric intracellular cation channel type B (291 aa).

Residues 1–16 (MEYPWDDLTLAFSRTS) lie on the Lumenal side of the membrane. Residues 17–33 (MFPFFDIAHYLVSVMAL) traverse the membrane as a helical segment. The Cytoplasmic portion of the chain corresponds to 34–47 (KQRPGAVAAAWSNP). A helical transmembrane segment spans residues 48–69 (LSSWLSAMLHCFGGGILSCILL). Topologically, residues 70–80 (AEPPLKFLTNH) are lumenal. The helical transmembrane segment at 81–99 (TNILLASSIWYIVFFCPRD) threads the bilayer. The Cytoplasmic segment spans residues 100–103 (LVSQ). Residues 104–122 (GYSYQPIQLLAAGMKEVTR) form a helical membrane-spanning segment. K118 and R122 together coordinate a 1,2-diacyl-sn-glycero-3-phospho-(1D-myo-inositol-4,5-bisphosphate). The Lumenal portion of the chain corresponds to 123 to 138 (TWKIVGGVAHANGYYR). The chain crosses the membrane as a helical span at residues 139–156 (NGWIVMIAVGWARGAGGA). Residues 157 to 179 (IITACEQLLKGDWKPEGDEWLKM) lie on the Cytoplasmic side of the membrane. The chain crosses the membrane as a helical span at residues 180-197 (SFPCKVTLLGSIMFTFQH). The Lumenal portion of the chain corresponds to 198–206 (TRHLAISKH). A helical membrane pass occupies residues 207–225 (DLMFLYTIFLVTIKVTMMM). The Cytoplasmic portion of the chain corresponds to 226–291 (TKDAAVTLTP…SAKRHAKKED (66 aa)). A disordered region spans residues 254–291 (LSEKKAEVKPSSNGSASSASKRGTEPPSSAKRHAKKED). The segment covering 264 to 273 (SSNGSASSAS) has biased composition (low complexity).

Belongs to the TMEM38 family. In terms of assembly, homotrimer; conformation seems to be controled by binding to diacylglycerol (DAG).

The protein localises to the endoplasmic reticulum membrane. It carries out the reaction K(+)(in) = K(+)(out). With respect to regulation, channel activity is activated by increased cytosolic Ca(2+) levels and blocked by luminal high Ca(2+) levels. Its function is as follows. Intracellular monovalent cation channel required for maintenance of rapid intracellular calcium release. Acts as a potassium counter-ion channel that functions in synchronization with calcium release from intracellular stores. Activated by increased cytosolic Ca(2+) levels. In Rattus norvegicus (Rat), this protein is Trimeric intracellular cation channel type B (Tmem38b).